Reading from the N-terminus, the 342-residue chain is Uricase (342 aa).

Catalysis depends on charge relay system residues Lys-35 and Thr-80. 7 residues coordinate urate: Thr-80, Asp-81, Phe-204, Arg-221, Val-269, Gln-270, and Asn-296. The active-site Charge relay system is His-298. Positions 340–342 (SHL) match the Microbody targeting signal motif.

Belongs to the uricase family. As to expression, malpighian tubules.

It localises to the peroxisome. The enzyme catalyses urate + O2 + H2O = 5-hydroxyisourate + H2O2. Its pathway is purine metabolism; urate degradation; (S)-allantoin from urate: step 1/3. Repressed by 20-hydroxyecdysone. Its function is as follows. Catalyzes the oxidation of uric acid to 5-hydroxyisourate, which is further processed to form (S)-allantoin. This is Uricase (Uro) from Drosophila virilis (Fruit fly).